Here is a 65-residue protein sequence, read N- to C-terminus: Large ribosomal subunit protein bL35 (65 aa).

It belongs to the bacterial ribosomal protein bL35 family.

In Thermus thermophilus (strain ATCC BAA-163 / DSM 7039 / HB27), this protein is Large ribosomal subunit protein bL35.